The chain runs to 269 residues: Ribosomal RNA small subunit methyltransferase J (269 aa).

Residues 125 to 126 (ER) and Asp-179 each bind S-adenosyl-L-methionine.

The protein belongs to the methyltransferase superfamily. RsmJ family.

The protein resides in the cytoplasm. The enzyme catalyses guanosine(1516) in 16S rRNA + S-adenosyl-L-methionine = N(2)-methylguanosine(1516) in 16S rRNA + S-adenosyl-L-homocysteine + H(+). Its function is as follows. Specifically methylates the guanosine in position 1516 of 16S rRNA. The chain is Ribosomal RNA small subunit methyltransferase J from Pseudomonas savastanoi pv. phaseolicola (strain 1448A / Race 6) (Pseudomonas syringae pv. phaseolicola (strain 1448A / Race 6)).